Reading from the N-terminus, the 374-residue chain is Coiled-coil domain-containing protein 89 (374 aa).

The segment at 1-40 (MRAPMLQKQQAPRMDTPPPEERLEKQNEKLNNQEEETEFK) is disordered. Phosphothreonine is present on T16. Residues 19 to 32 (PEERLEKQNEKLNN) show a composition bias toward basic and acidic residues. Positions 20–351 (EERLEKQNEK…DELRLQSEAF (332 aa)) form a coiled coil.

This sequence belongs to the CCDC89 family. As to quaternary structure, interacts with HEY1.

It localises to the cytoplasm. The protein localises to the nucleus. The protein is Coiled-coil domain-containing protein 89 (CCDC89) of Homo sapiens (Human).